The primary structure comprises 254 residues: Fructose-1,6-bisphosphatase (254 aa).

Residues glutamate 68, aspartate 84, leucine 86, and aspartate 87 each coordinate Mg(2+). Residues 87-89 (DGS), arginine 171, isoleucine 176, and arginine 195 each bind substrate. Aspartate 202 is a Mg(2+) binding site.

It belongs to the inositol monophosphatase superfamily. FBPase class 4 family. Homodimer. It depends on Mg(2+) as a cofactor.

It carries out the reaction beta-D-fructose 1,6-bisphosphate + H2O = beta-D-fructose 6-phosphate + phosphate. Its activity is regulated as follows. Inhibited by Li(+), ADP, ATP and glucose-6-phosphate. Catalyzes the conversion of D-fructose 1,6-bisphosphate to D-fructose 6-phosphate. In vitro, also has weak activity with inositol-1-phosphate, glucose-1-phosphate and glycerol-2-phosphate. In Pyrococcus furiosus (strain ATCC 43587 / DSM 3638 / JCM 8422 / Vc1), this protein is Fructose-1,6-bisphosphatase.